Here is a 354-residue protein sequence, read N- to C-terminus: Nicotinate-nucleotide--dimethylbenzimidazole phosphoribosyltransferase (354 aa).

Residue Glu317 is the Proton acceptor of the active site.

Belongs to the CobT family. In terms of assembly, homodimer.

The enzyme catalyses 5,6-dimethylbenzimidazole + nicotinate beta-D-ribonucleotide = alpha-ribazole 5'-phosphate + nicotinate + H(+). The protein operates within nucleoside biosynthesis; alpha-ribazole biosynthesis; alpha-ribazole from 5,6-dimethylbenzimidazole: step 1/2. Catalyzes the synthesis of alpha-ribazole-5'-phosphate from nicotinate mononucleotide (NAMN) and 5,6-dimethylbenzimidazole (DMB). This Salmonella arizonae (strain ATCC BAA-731 / CDC346-86 / RSK2980) protein is Nicotinate-nucleotide--dimethylbenzimidazole phosphoribosyltransferase.